The primary structure comprises 314 residues: MGCRCCKIIQSYLFDPVQVPSPGYVNEVNSCKLDEDDTDKLKGKWSSEVLVQKNDPQRQGSKKTESSSRTADPWEPCWPHQGPLPQGDAGGEHHACGVNGIGPAATPQPTGNSSPTQDDRGSWASTANTVPPTQPFLEGGGTRKQDCVLLASEGTQVMRNGDSRAPSEAESFALEVQDHVFQIPAPDYLQHWGPAGDNVDHNEKDCVFKNHTEDESLEGIQPPVGEHGLNTPFSVRRSWDSLNEDVETEVLSICFNEKGPVHAMPVVDSGNRQEDTHGSDGDGDGEIVDEDAAVAEALAALEAATAGEDLDETD.

Residue S30 is modified to Phosphoserine. The interval 36-142 is disordered; that stretch reads DDTDKLKGKW…TQPFLEGGGT (107 aa). A Phosphothreonine modification is found at T106. Residues 107-116 are compositionally biased toward polar residues; the sequence is PQPTGNSSPT. S238 and S241 each carry phosphoserine. Residues 267–291 are disordered; it reads VDSGNRQEDTHGSDGDGDGEIVDED. Residues 271–280 show a composition bias toward basic and acidic residues; the sequence is NRQEDTHGSD. The span at 281 to 291 shows a compositional bias: acidic residues; that stretch reads GDGDGEIVDED.

Interacts with KEAP1; this interaction prevents the ubiquitination of KEAP1 by TRIM25, thus protecting KEAP1 from degradation. Found in association with PDCD10 and members of the STE20 kinases, such as STK24, STK25 and STK26.

It localises to the cell membrane. In terms of biological role, acts as a tumor suppressor. Acts as a tumor suppressor for colorectal cancer cell proliferation by targeting KEAP1/USP17/ELK1/CDK6 axis. The sequence is that of PDCD10 and GCKIII kinases-associated protein 1 from Homo sapiens (Human).